The chain runs to 872 residues: Alanine--tRNA ligase (872 aa).

Zn(2+)-binding residues include histidine 567, histidine 571, cysteine 669, and histidine 673.

The protein belongs to the class-II aminoacyl-tRNA synthetase family. Requires Zn(2+) as cofactor.

The protein localises to the cytoplasm. The enzyme catalyses tRNA(Ala) + L-alanine + ATP = L-alanyl-tRNA(Ala) + AMP + diphosphate. In terms of biological role, catalyzes the attachment of alanine to tRNA(Ala) in a two-step reaction: alanine is first activated by ATP to form Ala-AMP and then transferred to the acceptor end of tRNA(Ala). Also edits incorrectly charged Ser-tRNA(Ala) and Gly-tRNA(Ala) via its editing domain. The chain is Alanine--tRNA ligase from Streptococcus agalactiae serotype III (strain NEM316).